A 434-amino-acid chain; its full sequence is 3-phosphoshikimate 1-carboxyvinyltransferase (434 aa).

3-phosphoshikimate is bound by residues K22, S23, and R27. K22 lines the phosphoenolpyruvate pocket. Positions 93 and 121 each coordinate phosphoenolpyruvate. The 3-phosphoshikimate site is built by S168, S169, Q170, S199, D320, and K347. Phosphoenolpyruvate is bound at residue Q170. D320 serves as the catalytic Proton acceptor. Phosphoenolpyruvate-binding residues include R351, R394, and K419.

The protein belongs to the EPSP synthase family. Monomer.

Its subcellular location is the cytoplasm. It catalyses the reaction 3-phosphoshikimate + phosphoenolpyruvate = 5-O-(1-carboxyvinyl)-3-phosphoshikimate + phosphate. It functions in the pathway metabolic intermediate biosynthesis; chorismate biosynthesis; chorismate from D-erythrose 4-phosphate and phosphoenolpyruvate: step 6/7. In terms of biological role, catalyzes the transfer of the enolpyruvyl moiety of phosphoenolpyruvate (PEP) to the 5-hydroxyl of shikimate-3-phosphate (S3P) to produce enolpyruvyl shikimate-3-phosphate and inorganic phosphate. This Burkholderia cenocepacia (strain ATCC BAA-245 / DSM 16553 / LMG 16656 / NCTC 13227 / J2315 / CF5610) (Burkholderia cepacia (strain J2315)) protein is 3-phosphoshikimate 1-carboxyvinyltransferase.